The primary structure comprises 285 residues: Gap junction Cx32.2 protein (285 aa).

At 2 to 19 (GDLGFLSKLLDQVQSHST) the chain is on the cytoplasmic side. Residues 20–40 (VIGKIWMTVLFLFRIMVLGAG) traverse the membrane as a helical segment. The Extracellular portion of the chain corresponds to 41-76 (AESVWGDEQSDFTCNTQQPGCENVCYDWTFPISHIR). The chain crosses the membrane as a helical span at residues 77–99 (FWVLQIIFVSTPTLIYLGHAMHI). The Cytoplasmic segment spans residues 100–148 (IQQETKLRARLSSPGGSRLCKQPKYTNEQGKVKIKGNLLGSYLTQLVFK). A helical transmembrane segment spans residues 149–171 (IIIEAAFIVGQYYLYGFIMVPMF). At 172 to 194 (PCSKKPCPFTVECYMSRPTEKTI) the chain is on the extracellular side. A helical transmembrane segment spans residues 195–217 (FIIFMLVVACVSLLLNVIEVFYL). At 218–285 (ICTRVRCGSR…AKEEKRLLSH (68 aa)) the chain is on the cytoplasmic side. Positions 264-285 (ETSQSIGGSLDGAKEEKRLLSH) are disordered. Residues 275–285 (GAKEEKRLLSH) are compositionally biased toward basic and acidic residues.

Belongs to the connexin family. Beta-type (group I) subfamily. In terms of assembly, a connexon is composed of a hexamer of connexins.

Its subcellular location is the cell membrane. The protein resides in the cell junction. It localises to the gap junction. Its function is as follows. One gap junction consists of a cluster of closely packed pairs of transmembrane channels, the connexons, through which materials of low MW diffuse from one cell to a neighboring cell. May be involved in ovarian follicular maturation. The polypeptide is Gap junction Cx32.2 protein (Micropogonias undulatus (Atlantic croaker)).